Here is a 339-residue protein sequence, read N- to C-terminus: DNA-directed RNA polymerase subunit alpha (339 aa).

An alpha N-terminal domain (alpha-NTD) region spans residues methionine 1–glutamate 234. The alpha C-terminal domain (alpha-CTD) stretch occupies residues phenylalanine 251 to valine 339.

Belongs to the RNA polymerase alpha chain family. As to quaternary structure, homodimer. The RNAP catalytic core consists of 2 alpha, 1 beta, 1 beta' and 1 omega subunit. When a sigma factor is associated with the core the holoenzyme is formed, which can initiate transcription.

It carries out the reaction RNA(n) + a ribonucleoside 5'-triphosphate = RNA(n+1) + diphosphate. Its function is as follows. DNA-dependent RNA polymerase catalyzes the transcription of DNA into RNA using the four ribonucleoside triphosphates as substrates. This is DNA-directed RNA polymerase subunit alpha from Maricaulis maris (strain MCS10) (Caulobacter maris).